The sequence spans 559 residues: Arginine--tRNA ligase (559 aa).

Residues 116–126 carry the 'HIGH' region motif; that stretch reads ANPNGPLHVGH.

This sequence belongs to the class-I aminoacyl-tRNA synthetase family.

Its subcellular location is the cytoplasm. The catalysed reaction is tRNA(Arg) + L-arginine + ATP = L-arginyl-tRNA(Arg) + AMP + diphosphate. The sequence is that of Arginine--tRNA ligase from Methanosphaerula palustris (strain ATCC BAA-1556 / DSM 19958 / E1-9c).